A 177-amino-acid chain; its full sequence is R-phycoerythrin beta chain (177 aa).

Phycourobilin contacts are provided by C50 and C61. The residue at position 72 (N72) is an N4-methylasparagine. The (2R,3E)-phycoerythrobilin site is built by C82 and C158.

It belongs to the phycobiliprotein family. Heterodimer of an alpha and a beta chain. Post-translationally, contains two covalently linked phycoerythrobilin chromophores and one covalently linked phycourobilin chromophore.

Its subcellular location is the plastid. It localises to the chloroplast thylakoid membrane. In terms of biological role, light-harvesting photosynthetic bile pigment-protein from the phycobiliprotein complex. This Porphyra purpurea (Red seaweed) protein is R-phycoerythrin beta chain (cpeB).